Reading from the N-terminus, the 609-residue chain is Chaperone protein DnaK (609 aa).

Phosphothreonine; by autocatalysis is present on Thr172. Residues 578 to 609 (QAQAQQQAGAGGAAKKDENVVDAEFEEVKDDK) form a disordered region. Residues 597–609 (VVDAEFEEVKDDK) show a composition bias toward acidic residues.

It belongs to the heat shock protein 70 family.

Functionally, acts as a chaperone. The polypeptide is Chaperone protein DnaK (Geobacillus sp. (strain WCH70)).